The chain runs to 219 residues: Transmembrane emp24 domain-containing protein 10 (219 aa).

Positions 1–31 are cleaved as a signal peptide; the sequence is MSGSSGPLSWPGPRPCALLFLLLLGPSSVLA. A required for interaction with STX17 region spans residues 1–142; sequence MSGSSGPLSW…KNYEEIAKVE (142 aa). Residues 32 to 185 lie on the Lumenal side of the membrane; sequence ISFHLPVNSR…RDTNESTNTR (154 aa). A GOLD domain is found at 41 to 193; that stretch reads RKCLREEIHK…TRVLYFSIFS (153 aa). Positions 147–178 are required for TMED10 and TMED2 cis-Golgi network localization; the sequence is LEVELRRLEDLSESIVNDFAYMKKREEEMRDT. Dimethylated arginine is present on residues R171 and R176. N179 carries an N-linked (GlcNAc...) asparagine glycan. The chain crosses the membrane as a helical span at residues 186 to 206; that stretch reads VLYFSIFSMLCLIGLATWQVF. An interaction with COPG1 region spans residues 204-219; the sequence is QVFYLRRFFKAKKLIE. At 207 to 219 the chain is on the cytoplasmic side; sequence YLRRFFKAKKLIE. The tract at residues 207 to 219 is interaction with ARF1 and IL1B; the sequence is YLRRFFKAKKLIE. The short motif at 211-212 is the COPII vesicle coat-binding element; the sequence is FF. Residues 211–219 carry the COPI vesicle coat-binding motif; it reads FFKAKKLIE.

Belongs to the EMP24/GP25L family. Predominantly dimeric and to a lesser extent monomeric in the ER. Monomer and dimer in ERGIC and cis-Golgi network. Forms homooligomer (via GOLD domain); the assembly is promoted by direct binding with leaderless cargos and may form a protein channel that facilitates cargo entry into the ERGIC. Forms heterooligomeric complexes with other members of the p24 family such as TMED2, TMED7 and TMED9. Interacts (via GOLD domain) with TMED2 (via GOLD domain); the complex is required for export of TMED10 from the ER to the cis-Golgi network; the complex is proposed to be involved in cis-Golgi network dynamics and / or biogenesis. Associates with the COPI vesicle coat subunits (coatomer). Tetramerization of the cytoplasmic domain at the Golgi membrane in vitro; the complex is proposed to interact with COPI coatomer and induce budding of the vesicles. Interacts with COPG1; the interaction involves TMED10 homodimer. Interacts with ARF1 (GDP-bound); the interaction probably involves a TMED10 oligomer. Interacts with SEC23A, SEC24B, SEC24C and SEC24D components of the coat protein complex II/COPII, indicative of an association of TMED10 with the COPII vesicle coat. Interacts with CD59. Interacts with MPPE1/PGAP5; the complex might recruit and sort GPI-anchored proteins to the ER-exit site, or the interaction might lead to recycling of PGAP5 between the ER and the Golgi. Interacts with F2LR1/PAR2. Interacts with KDELR2/ERD2; the interaction is disrupted by KDELR2 ligand. Found in a complex composed at least of SURF4, TMED2 and TMED10. Associates with the presenilin-dependent gamma-secretase complex. Interacts with STX17; the interaction is direct. Interacts with IL-1; the interaction is direct. Interacts with RAB21 (active GTP-bound form); the interaction is indirect and regulates TMED10 abundance and localization at the Golgi.

The protein resides in the endoplasmic reticulum membrane. Its subcellular location is the endoplasmic reticulum-Golgi intermediate compartment membrane. It localises to the golgi apparatus membrane. The protein localises to the golgi apparatus. It is found in the cis-Golgi network membrane. The protein resides in the trans-Golgi network membrane. Its subcellular location is the cytoplasmic vesicle. It localises to the secretory vesicle membrane. The protein localises to the cell membrane. It is found in the melanosome. Functionally, cargo receptor involved in protein vesicular trafficking and quality control in the endoplasmic reticulum (ER) and Golgi. The p24 protein family is a group of transmembrane proteins that bind coat protein complex I/COPI and coat protein complex II/COPII involved in vesicular trafficking between the membranes. Acts at the lumenal side for incorporation of secretory cargo molecules into transport vesicles and involved in vesicle coat formation at the cytoplasmic side. Mainly functions in the early secretory pathway and cycles between the ER, ER-Golgi intermediate compartment (ERGIC) and Golgi, mediating cargo transport through COPI and COPII-coated vesicles. In COPII vesicle-mediated anterograde transport, involved in the transport of GPI-anchored proteins by acting together with TMED2 as their cargo receptor; the function specifically implies SEC24C and SEC24D of the COPII vesicle coat and lipid raft-like microdomains of the ER. Recognizes GPI anchors structural remodeled in the ER by the GPI inositol-deacylase/PGAP1 and the metallophosphoesterase MPPE1/PGAP5. In COPI vesicle-mediated retrograde transport, involved in the biogenesis of COPI vesicles and vesicle coat recruitment. Involved in trafficking of amyloid beta A4 protein and soluble APP-beta release (independent from the modulation of gamma-secretase activity). Involved in the KDELR2-mediated retrograde transport of the toxin A subunit (CTX-A-K63)together with COPI and the COOH terminus of KDELR2. On Golgi membranes, acts as a primary receptor for ARF1-GDP, a GTP-binding protein involved in COPI-vesicle formation. Increases coatomer-dependent GTPase-activating activity of ARFGAP2 which mediates the hydrolysis of ARF1-bound GTP and therefore modulates protein trafficking from the Golgi apparatus. Involved in the exocytic trafficking of G protein-coupled receptors F2LR1/PAR2 (trypsin and tryspin-like enzyme receptor), OPRM1 (opioid receptor) and P2RY4 (UTD and UDP receptor) from the Golgi to the plasma membrane, thus contributing to receptor resensitization. In addition to its cargo receptor activity, may also act as a protein channel after oligomerization, facilitating the post-translational entry of leaderless cytoplasmic cargo into the ERGIC. Involved in the translocation into ERGIC, the vesicle entry and the secretion of leaderless cargos (lacking the secretion signal sequence), including the mature form of interleukin 1/IL-1 family members, the alpha-crystallin B chain HSPB5, the carbohydrate-binding proteins galectin-1/LGALS1 and galectin-3/LGALS3, the microtubule-associated protein Tau/MAPT, and the annexin A1/ANXA1; the translocation process is dependent on cargo protein unfolding and enhanced by chaperones HSP90AB1 and HSP90B1/GRP9. Could also associates with the presenilin-dependent gamma-secretase complex in order to regulate gamma-cleavages of the amyloid beta A4 protein to yield amyloid-beta 40/Abeta40. In Mesocricetus auratus (Golden hamster), this protein is Transmembrane emp24 domain-containing protein 10 (TMED10).